Here is a 123-residue protein sequence, read N- to C-terminus: Cholecystokinin A (123 aa).

An N-terminal signal peptide occupies residues 1–20 (MYSGICICLLLAMLSASSKA). Positions 21 to 103 (HQSEDAVVTE…FDQPHRINDR (83 aa)) are excised as a propeptide. Tyr-105 carries the post-translational modification Sulfotyrosine. At Phe-111 the chain carries Phenylalanine amide. Residues 115–123 (SAEEYEYSS) constitute a propeptide that is removed on maturation.

Belongs to the gastrin/cholecystokinin family. In terms of processing, the precursor is cleaved by proteases to produce a number of active cholecystokinins. Brain, gastrointestinal tract and lung.

The protein resides in the secreted. This Xenopus laevis (African clawed frog) protein is Cholecystokinin A (cck-a).